Here is a 1637-residue protein sequence, read N- to C-terminus: Serine/threonine-protein kinase Genghis Khan (1637 aa).

Residues 100–369 (FDILKIIGRG…IQDFMDHPWF (270 aa)) form the Protein kinase domain. Residues 106 to 114 (IGRGAFGEV) and Lys129 contribute to the ATP site. Catalysis depends on Asp224, which acts as the Proton acceptor. An AGC-kinase C-terminal domain is found at 370–440 (VGIDWKNIRQ…SLTSSSTLDS (71 aa)). Coiled-coil stretches lie at residues 473 to 587 (VDSV…EDAV), 643 to 688 (SEKL…LKYT), and 839 to 881 (DELS…DLQK). The tract at residues 538-575 (RNQKQKLSRQVRDKEEELDGAMQKNDSLRNELRKSDKT) is disordered. Positions 563–575 (DSLRNELRKSDKT) are enriched in basic and acidic residues. Thr895 carries the post-translational modification Phosphothreonine. Residues 952-971 (NNKDHSSMKEASVSDLSREE) are disordered. The segment at 989–1039 (IHQFLVRTFSSPTKCNHCTSLMVGLTRQGVVCEICGFACHTICCQKVPTTC) adopts a Phorbol-ester/DAG-type zinc-finger fold. Residues 1059–1177 (GTAYEGYVKV…WVIALGELHR (119 aa)) form the PH domain. A CNH domain is found at 1203–1489 (IRNALCSVII…LPLNNLGNVV (287 aa)). One can recognise a CRIB domain in the interval 1546 to 1559 (ISAPTNFNHISHMG). Residue Ser1584 is modified to Phosphoserine. Residues 1611 to 1637 (DYGNDNIISRTPSPMASSFMDGLSNND) are disordered. Residues 1616–1626 (NIISRTPSPMA) show a composition bias toward polar residues.

It belongs to the protein kinase superfamily. AGC Ser/Thr protein kinase family. DMPK subfamily. As to quaternary structure, interacts tightly with GTP-bound but not GDP-bound Cdc42.

It catalyses the reaction L-seryl-[protein] + ATP = O-phospho-L-seryl-[protein] + ADP + H(+). The enzyme catalyses L-threonyl-[protein] + ATP = O-phospho-L-threonyl-[protein] + ADP + H(+). Acts as a downstream effector for the regulation of actin polymerization by Cdc42. In Drosophila melanogaster (Fruit fly), this protein is Serine/threonine-protein kinase Genghis Khan (gek).